Consider the following 265-residue polypeptide: Imidazole glycerol phosphate synthase subunit HisF (265 aa).

Active-site residues include D11 and D130.

It belongs to the HisA/HisF family. In terms of assembly, heterodimer of HisH and HisF.

Its subcellular location is the cytoplasm. It catalyses the reaction 5-[(5-phospho-1-deoxy-D-ribulos-1-ylimino)methylamino]-1-(5-phospho-beta-D-ribosyl)imidazole-4-carboxamide + L-glutamine = D-erythro-1-(imidazol-4-yl)glycerol 3-phosphate + 5-amino-1-(5-phospho-beta-D-ribosyl)imidazole-4-carboxamide + L-glutamate + H(+). Its pathway is amino-acid biosynthesis; L-histidine biosynthesis; L-histidine from 5-phospho-alpha-D-ribose 1-diphosphate: step 5/9. Functionally, IGPS catalyzes the conversion of PRFAR and glutamine to IGP, AICAR and glutamate. The HisF subunit catalyzes the cyclization activity that produces IGP and AICAR from PRFAR using the ammonia provided by the HisH subunit. The protein is Imidazole glycerol phosphate synthase subunit HisF of Idiomarina loihiensis (strain ATCC BAA-735 / DSM 15497 / L2-TR).